Reading from the N-terminus, the 445-residue chain is DNA polymerase IV (445 aa).

The region spanning 49–229 is the UmuC domain; it reads LAHVDCDAFY…KPVGMIWGVG (181 aa). Residues D53 and D146 each contribute to the Mg(2+) site. E147 is a catalytic residue.

The protein belongs to the DNA polymerase type-Y family. In terms of assembly, monomer. The cofactor is Mg(2+).

Its subcellular location is the cytoplasm. The enzyme catalyses DNA(n) + a 2'-deoxyribonucleoside 5'-triphosphate = DNA(n+1) + diphosphate. Functionally, poorly processive, error-prone DNA polymerase involved in untargeted mutagenesis. Copies undamaged DNA at stalled replication forks, which arise in vivo from mismatched or misaligned primer ends. These misaligned primers can be extended by PolIV. Exhibits no 3'-5' exonuclease (proofreading) activity. May be involved in translesional synthesis, in conjunction with the beta clamp from PolIII. In Brucella melitensis biotype 1 (strain ATCC 23456 / CCUG 17765 / NCTC 10094 / 16M), this protein is DNA polymerase IV.